The sequence spans 532 residues: Nectin-4 (532 aa).

The first 30 residues, 1–30, serve as a signal peptide directing secretion; it reads MGPLHGALLPPISVTVSLLILLLCAPGGRC. Positions 31-142 constitute an Ig-like V-type domain; it reads GVVHTEKSMT…GNFDAELELK (112 aa). The Extracellular segment spans residues 31–344; the sequence is GVVHTEKSMT…TKIDLVSVSL (314 aa). Intrachain disulfides connect cysteine 51–cysteine 125, cysteine 169–cysteine 221, and cysteine 266–cysteine 312. Ig-like C2-type domains lie at 146-235 and 244-328; these read PPLP…KRIT and AEVS…AIVS. Positions 152-179 are disordered; that stretch reads GPGPPLTEGEGKSLAASCTAEGNPAPTL. N-linked (GlcNAc...) asparagine glycans are attached at residues asparagine 189 and asparagine 282. Residues 345–365 traverse the membrane as a helical segment; that stretch reads GSVGILTAVLLVVLVITLLLV. Over 366–532 the chain is Cytoplasmic; that stretch reads NRHHKRQTKQ…IYINGRGHLV (167 aa). The tract at residues 453–491 is disordered; the sequence is QTELLSTVPDEEVKEDGEEPEQVEQSLEKEPNPTEPDGM. Residues 461–474 show a composition bias toward acidic residues; the sequence is PDEEVKEDGEEPEQ.

Belongs to the nectin family.

Its subcellular location is the cell membrane. Functionally, may be involved in cell adhesion. This chain is Nectin-4, found in Xenopus tropicalis (Western clawed frog).